The following is a 357-amino-acid chain: Protein-L-isoaspartate O-methyltransferase domain-containing protein 1 (357 aa).

The N-myristoyl glycine moiety is linked to residue Gly2. Residue Ser64 is part of the active site. AdoMet binding motif stretches follow at residues 85-94 (LNLGSGTGYL), 160-164 (YDRIY), and 181-191 (LKVGGILVMPI). A BC-box region spans residues 240-250 (VRNLQDLARIY). Residues 299 to 333 (PLDSEEDEKMEEDNKEEEEKDHNEAMKPEEPPQNL) form a disordered region. Acidic residues predominate over residues 301-317 (DSEEDEKMEEDNKEEEE). A compositionally biased stretch (basic and acidic residues) spans 318–333 (KDHNEAMKPEEPPQNL). Residues 341-344 (LPLP) form a CUL-box region.

The protein belongs to the methyltransferase superfamily. L-isoaspartyl/D-aspartyl protein methyltransferase family. As to quaternary structure, component of the probable ECS(PCMTD1) E3 ubiquitin-protein ligase complex, at least composed of CUL5, ELOB, ELOC, RBX2 and PCMTD1. Interacts (via the BC-box) with ELOB and ELOC; the interaction is direct and stabilizes PCMTD1.

The protein localises to the cytoplasm. The protein resides in the membrane. Its function is as follows. Substrate recognition component of an ECS (Elongin BC-CUL5-SOCS-box protein) E3 ubiquitin ligase complex which mediates the ubiquitination and subsequent proteasomal degradation of target proteins. Specifically binds to the methyltransferase cofactor S-adenosylmethionine (AdoMet) via the N-terminal AdoMet binding motif, but does not display methyltransferase activity. May provide an alternate maintenance pathway for modified proteins by acting as a damage-specific E3 ubiquitin ligase adaptor protein. This chain is Protein-L-isoaspartate O-methyltransferase domain-containing protein 1, found in Homo sapiens (Human).